Reading from the N-terminus, the 559-residue chain is Small ribosomal subunit protein bS1 (559 aa).

6 consecutive S1 motif domains span residues 21–87 (GSII…LSRE), 105–171 (SETV…VSRR), 192–260 (GIEI…LGLK), 277–347 (GIKL…LGLK), 364–434 (GIHV…LGIK), and 451–520 (GAII…LTFH).

This sequence belongs to the bacterial ribosomal protein bS1 family.

Its function is as follows. Binds mRNA; thus facilitating recognition of the initiation point. It is needed to translate mRNA with a short Shine-Dalgarno (SD) purine-rich sequence. The sequence is that of Small ribosomal subunit protein bS1 (rpsA) from Buchnera aphidicola subsp. Schizaphis graminum (strain Sg).